The sequence spans 580 residues: Glutamyl-tRNA(Gln) amidotransferase subunit B-2, chloroplastic/mitochondrial (580 aa).

2 stretches are compositionally biased toward low complexity: residues 20 to 35 (RRDA…ATVS) and 42 to 59 (AVST…SAAV). The interval 20 to 64 (RRDATAAASTSAATVSRGRRARAVSTTTTTSSSSSSSAAVDARDA) is disordered.

It belongs to the GatB/GatE family. GatB subfamily. In terms of assembly, subunit of the heterotrimeric GatCAB amidotransferase (AdT) complex, composed of A, B and C subunits.

The protein resides in the mitochondrion. Its subcellular location is the plastid. It is found in the chloroplast. It carries out the reaction L-glutamyl-tRNA(Gln) + L-glutamine + ATP + H2O = L-glutaminyl-tRNA(Gln) + L-glutamate + ADP + phosphate + H(+). Functionally, allows the formation of correctly charged Gln-tRNA(Gln) through the transamidation of misacylated Glu-tRNA(Gln) in chloroplasts and mitochondria. The reaction takes place in the presence of glutamine and ATP through an activated gamma-phospho-Glu-tRNA(Gln). This chain is Glutamyl-tRNA(Gln) amidotransferase subunit B-2, chloroplastic/mitochondrial, found in Micromonas pusilla (strain CCMP1545) (Picoplanktonic green alga).